The chain runs to 432 residues: Adenylosuccinate synthetase 2 (432 aa).

GTP is bound by residues 12–18 (GDEGKGR) and 40–42 (GHT). Catalysis depends on D13, which acts as the Proton acceptor. Residues D13 and G40 each contribute to the Mg(2+) site. IMP is bound by residues 13–16 (DEGK), 38–41 (NAGH), T128, R142, Q222, T237, and R301. Catalysis depends on H41, which acts as the Proton donor. 297-303 (VNTGRPR) is a substrate binding site. GTP contacts are provided by residues R303, 329-331 (KLD), and 411-413 (TTG).

Belongs to the adenylosuccinate synthetase family. As to quaternary structure, homodimer. Mg(2+) is required as a cofactor.

Its subcellular location is the cytoplasm. It carries out the reaction IMP + L-aspartate + GTP = N(6)-(1,2-dicarboxyethyl)-AMP + GDP + phosphate + 2 H(+). The protein operates within purine metabolism; AMP biosynthesis via de novo pathway; AMP from IMP: step 1/2. Plays an important role in the de novo pathway of purine nucleotide biosynthesis. Catalyzes the first committed step in the biosynthesis of AMP from IMP. In Burkholderia lata (strain ATCC 17760 / DSM 23089 / LMG 22485 / NCIMB 9086 / R18194 / 383), this protein is Adenylosuccinate synthetase 2.